Here is a 222-residue protein sequence, read N- to C-terminus: Thiamine-phosphate synthase (222 aa).

Residues 40 to 44 and N81 contribute to the 4-amino-2-methyl-5-(diphosphooxymethyl)pyrimidine site; that span reads QLRDK. Residues D82 and D101 each coordinate Mg(2+). A 4-amino-2-methyl-5-(diphosphooxymethyl)pyrimidine-binding site is contributed by S120. A 2-[(2R,5Z)-2-carboxy-4-methylthiazol-5(2H)-ylidene]ethyl phosphate-binding site is contributed by 146–148; sequence TPT. K149 lines the 4-amino-2-methyl-5-(diphosphooxymethyl)pyrimidine pocket. G178 lines the 2-[(2R,5Z)-2-carboxy-4-methylthiazol-5(2H)-ylidene]ethyl phosphate pocket.

The protein belongs to the thiamine-phosphate synthase family. Mg(2+) is required as a cofactor.

It carries out the reaction 2-[(2R,5Z)-2-carboxy-4-methylthiazol-5(2H)-ylidene]ethyl phosphate + 4-amino-2-methyl-5-(diphosphooxymethyl)pyrimidine + 2 H(+) = thiamine phosphate + CO2 + diphosphate. The catalysed reaction is 2-(2-carboxy-4-methylthiazol-5-yl)ethyl phosphate + 4-amino-2-methyl-5-(diphosphooxymethyl)pyrimidine + 2 H(+) = thiamine phosphate + CO2 + diphosphate. It catalyses the reaction 4-methyl-5-(2-phosphooxyethyl)-thiazole + 4-amino-2-methyl-5-(diphosphooxymethyl)pyrimidine + H(+) = thiamine phosphate + diphosphate. The protein operates within cofactor biosynthesis; thiamine diphosphate biosynthesis; thiamine phosphate from 4-amino-2-methyl-5-diphosphomethylpyrimidine and 4-methyl-5-(2-phosphoethyl)-thiazole: step 1/1. Condenses 4-methyl-5-(beta-hydroxyethyl)thiazole monophosphate (THZ-P) and 2-methyl-4-amino-5-hydroxymethyl pyrimidine pyrophosphate (HMP-PP) to form thiamine monophosphate (TMP). The protein is Thiamine-phosphate synthase of Mycobacterium tuberculosis (strain ATCC 25177 / H37Ra).